Reading from the N-terminus, the 352-residue chain is F-box/kelch-repeat protein At1g57790 (352 aa).

Residues 10–56 (KNLWKDLPLELLSSVMTFLEIKDNVRASVVCKSWFEAAVSVRVIDKS) form the F-box domain. Kelch repeat units lie at residues 148 to 189 (VVFT…HNNV) and 190 to 234 (VFSN…WNEG).

In Arabidopsis thaliana (Mouse-ear cress), this protein is F-box/kelch-repeat protein At1g57790.